A 456-amino-acid polypeptide reads, in one-letter code: Methionine aminopeptidase 2 (456 aa).

The span at 1–11 (MTIPVPKPAHP) shows a compositional bias: pro residues. The segment at 1–127 (MTIPVPKPAH…SYRTTSSEKR (127 aa)) is disordered. Over residues 31 to 45 (EADEEEDDDDEEGKE) the composition is skewed to acidic residues. The span at 66-79 (KKKKKKKKKPKKKK) shows a compositional bias: basic residues. Histidine 209 contributes to the substrate binding site. Residues aspartate 229, aspartate 240, and histidine 309 each contribute to the a divalent metal cation site. Histidine 317 contributes to the substrate binding site. A divalent metal cation-binding residues include glutamate 343 and glutamate 437.

The protein belongs to the peptidase M24A family. Methionine aminopeptidase eukaryotic type 2 subfamily. Co(2+) serves as cofactor. Requires Zn(2+) as cofactor. The cofactor is Mn(2+). Fe(2+) is required as a cofactor.

It is found in the cytoplasm. The enzyme catalyses Release of N-terminal amino acids, preferentially methionine, from peptides and arylamides.. Functionally, cotranslationally removes the N-terminal methionine from nascent proteins. The N-terminal methionine is often cleaved when the second residue in the primary sequence is small and uncharged (Met-Ala-, Cys, Gly, Pro, Ser, Thr, or Val). In Puccinia graminis f. sp. tritici (strain CRL 75-36-700-3 / race SCCL) (Black stem rust fungus), this protein is Methionine aminopeptidase 2.